The sequence spans 146 residues: Hemoglobin subunit beta-1 (146 aa).

The region spanning 2 to 146 (EWTDQERATI…VVSALGKQYH (145 aa)) is the Globin domain. The heme b site is built by His-63 and His-92.

Belongs to the globin family. Hb1 is a heterotetramer of two alpha-1 chains and two beta-1 chains. Hb2 is a heterotetramer of two alpha-2 chains and two beta-1 chains. HbC is a heterotetramer of two alpha-1 chains and two beta-2 chains. As to expression, red blood cells.

In terms of biological role, involved in oxygen transport from gills to the various peripheral tissues. The sequence is that of Hemoglobin subunit beta-1 from Eleginops maclovinus (Patagonian blennie).